The sequence spans 124 residues: Fluoride-specific ion channel FluC (124 aa).

4 helical membrane-spanning segments follow: residues M1 to N21, T36 to F56, L66 to A86, and A94 to F114. 2 residues coordinate Na(+): G74 and T77.

The protein belongs to the fluoride channel Fluc/FEX (TC 1.A.43) family.

The protein localises to the cell inner membrane. It carries out the reaction fluoride(in) = fluoride(out). Na(+) is not transported, but it plays an essential structural role and its presence is essential for fluoride channel function. Its function is as follows. Fluoride-specific ion channel. Important for reducing fluoride concentration in the cell, thus reducing its toxicity. This chain is Fluoride-specific ion channel FluC, found in Rhodopseudomonas palustris (strain ATCC BAA-98 / CGA009).